The sequence spans 158 residues: 18.1 kDa class I heat shock protein (158 aa).

One can recognise a sHSP domain in the interval 44 to 158; the sequence is ENPAFVSTRV…AEVKSIEISG (115 aa).

The protein belongs to the small heat shock protein (HSP20) family. In terms of assembly, forms oligomeric structures.

It localises to the cytoplasm. This chain is 18.1 kDa class I heat shock protein (HSP18.1), found in Pisum sativum (Garden pea).